The sequence spans 257 residues: Homeobox protein EMX1 (257 aa).

The segment at residues 159 to 218 (PKRIRTAFSPSQLLRLERAFEKNHYVVGAERKQLAGSLSLSETQVKVWFQNRRTKYKRQK) is a DNA-binding region (homeobox). The interval 216 to 257 (RQKLEEEGPESEQKKKGSHHINRWRIATKQANGEDIDVTSND) is disordered. Residues 217–230 (QKLEEEGPESEQKK) show a composition bias toward basic and acidic residues.

It belongs to the EMX homeobox family. In terms of assembly, interacts with WRD11 (via the N-terminal and the central portion of the protein); the interaction associates EMX1 with GLI3. Cerebral cortex. Expressed in the olfactory bulbs.

Its subcellular location is the nucleus. Its function is as follows. Transcription factor, which in cooperation with EMX2, acts to generate the boundary between the roof and archipallium in the developing brain. May function in combinations with OTX1/2 to specify cell fates in the developing central nervous system. This Mus musculus (Mouse) protein is Homeobox protein EMX1 (Emx1).